Consider the following 363-residue polypeptide: NADH-quinone oxidoreductase subunit H (363 aa).

10 consecutive transmembrane segments (helical) span residues 29–49 (VLKI…YVVW), 62–82 (GPMY…KLLF), 96–116 (FIIA…VVPF), 127–147 (VGLL…ILAG), 163–183 (AAQV…VMIA), 202–222 (FFDW…VSGV), 238–257 (EIVA…LFFL), 264–286 (ILVS…QGWV), 299–319 (KGGW…YIWF), and 339–359 (FIPL…YGVI).

This sequence belongs to the complex I subunit 1 family. NDH-1 is composed of 14 different subunits. Subunits NuoA, H, J, K, L, M, N constitute the membrane sector of the complex.

It is found in the cell inner membrane. The catalysed reaction is a quinone + NADH + 5 H(+)(in) = a quinol + NAD(+) + 4 H(+)(out). In terms of biological role, NDH-1 shuttles electrons from NADH, via FMN and iron-sulfur (Fe-S) centers, to quinones in the respiratory chain. The immediate electron acceptor for the enzyme in this species is believed to be ubiquinone. Couples the redox reaction to proton translocation (for every two electrons transferred, four hydrogen ions are translocated across the cytoplasmic membrane), and thus conserves the redox energy in a proton gradient. This subunit may bind ubiquinone. In Xanthomonas oryzae pv. oryzae (strain PXO99A), this protein is NADH-quinone oxidoreductase subunit H.